Here is a 162-residue protein sequence, read N- to C-terminus: MRLTSKGRYAVTAMLDVALNSEAGPVPLADISERQGISLSYLEQLFSRLRKNGLVSSVRGPGGGYLLGKDASSIAVGEVISAVDESVDATRCQGKGGCQGGDKCLTHALWRDLSDRLTGFLNNITLGELVNNQEVLDVSGRQHTHDAPRTRTQDAIDVKLRA.

Positions 2–131 constitute an HTH rrf2-type domain; it reads RLTSKGRYAV…NNITLGELVN (130 aa). The segment at residues 28 to 51 is a DNA-binding region (H-T-H motif); it reads LADISERQGISLSYLEQLFSRLRK. Residues Cys-92, Cys-98, and Cys-104 each contribute to the [2Fe-2S] cluster site. The disordered stretch occupies residues 140-162; the sequence is GRQHTHDAPRTRTQDAIDVKLRA. The segment covering 143-162 has biased composition (basic and acidic residues); it reads HTHDAPRTRTQDAIDVKLRA.

The cofactor is [2Fe-2S] cluster.

In terms of biological role, regulates the transcription of several operons and genes involved in the biogenesis of Fe-S clusters and Fe-S-containing proteins. The chain is HTH-type transcriptional regulator IscR from Shigella flexneri.